The following is a 392-amino-acid chain: Branched-chain-amino-acid aminotransferase, mitochondrial (392 aa).

The transit peptide at 1–27 (MAAAALGQIWARKLLSVPWLLCGPRRY) directs the protein to the mitochondrion. Tyr168 serves as a coordination point for substrate. N6-(pyridoxal phosphate)lysine is present on Lys229. Lys321 bears the N6-acetyllysine mark.

It belongs to the class-IV pyridoxal-phosphate-dependent aminotransferase family. Homodimer. The cofactor is pyridoxal 5'-phosphate. Ubiquitous.

It localises to the mitochondrion. The enzyme catalyses L-leucine + 2-oxoglutarate = 4-methyl-2-oxopentanoate + L-glutamate. It catalyses the reaction L-isoleucine + 2-oxoglutarate = (S)-3-methyl-2-oxopentanoate + L-glutamate. The catalysed reaction is L-valine + 2-oxoglutarate = 3-methyl-2-oxobutanoate + L-glutamate. In terms of biological role, catalyzes the first reaction in the catabolism of the essential branched chain amino acids leucine, isoleucine, and valine. May also function as a transporter of branched chain alpha-keto acids. This Homo sapiens (Human) protein is Branched-chain-amino-acid aminotransferase, mitochondrial (BCAT2).